We begin with the raw amino-acid sequence, 327 residues long: GTP 3',8-cyclase (327 aa).

Residues 4 to 226 (AFARDIHYLR…LRLGDHPGIR (223 aa)) enclose the Radical SAM core domain. Residue arginine 13 coordinates GTP. Residues cysteine 20 and cysteine 24 each contribute to the [4Fe-4S] cluster site. Tyrosine 26 is a binding site for S-adenosyl-L-methionine. Cysteine 27 lines the [4Fe-4S] cluster pocket. Arginine 63 serves as a coordination point for GTP. Residue glycine 67 coordinates S-adenosyl-L-methionine. Threonine 94 is a GTP binding site. Serine 118 lines the S-adenosyl-L-methionine pocket. Residue lysine 155 coordinates GTP. Methionine 189 lines the S-adenosyl-L-methionine pocket. [4Fe-4S] cluster contacts are provided by cysteine 254 and cysteine 257. 259–261 (RLR) is a GTP binding site. Cysteine 271 lines the [4Fe-4S] cluster pocket.

The protein belongs to the radical SAM superfamily. MoaA family. As to quaternary structure, monomer and homodimer. [4Fe-4S] cluster is required as a cofactor.

It carries out the reaction GTP + AH2 + S-adenosyl-L-methionine = (8S)-3',8-cyclo-7,8-dihydroguanosine 5'-triphosphate + 5'-deoxyadenosine + L-methionine + A + H(+). The protein operates within cofactor biosynthesis; molybdopterin biosynthesis. In terms of biological role, catalyzes the cyclization of GTP to (8S)-3',8-cyclo-7,8-dihydroguanosine 5'-triphosphate. In Heliobacterium modesticaldum (strain ATCC 51547 / Ice1), this protein is GTP 3',8-cyclase.